The chain runs to 250 residues: Cell division protein ZapD (250 aa).

Belongs to the ZapD family. As to quaternary structure, interacts with FtsZ.

Its subcellular location is the cytoplasm. In terms of biological role, cell division factor that enhances FtsZ-ring assembly. Directly interacts with FtsZ and promotes bundling of FtsZ protofilaments, with a reduction in FtsZ GTPase activity. The protein is Cell division protein ZapD of Pectobacterium atrosepticum (strain SCRI 1043 / ATCC BAA-672) (Erwinia carotovora subsp. atroseptica).